The sequence spans 187 residues: Early E3 20.6 kDa glycoprotein (187 aa).

Residues Asn-30, Asn-73, Asn-117, Asn-134, and Asn-135 are each glycosylated (N-linked (GlcNAc...) asparagine; by host).

It belongs to the adenoviridae E3_20 family.

In Human adenovirus B serotype 11 (strain Slobiski) (HAdV-11), this protein is Early E3 20.6 kDa glycoprotein.